Here is a 480-residue protein sequence, read N- to C-terminus: Iroquois-class homeodomain protein IRX-1 (480 aa).

The segment at residues 125-188 (YGDPGRPKNA…ANARRRLKKE (64 aa)) is a DNA-binding region (homeobox; TALE-type). Disordered regions lie at residues 190-268 (KVTW…QGSP), 280-354 (SPLG…PLQH), and 401-480 (PHGP…LPSA). Residues 210–228 (TEGDPEKAEDDEEIDLESI) show a composition bias toward acidic residues. The segment covering 229 to 239 (DIDKIDEHDGD) has biased composition (basic and acidic residues). At Ser241 the chain carries Phosphoserine. Low complexity-rich tracts occupy residues 252–262 (PHAPAAPSALA) and 340–351 (HPGAHGPSAGAP). Positions 404–417 (PHLPAPPPPQPPVA) are enriched in pro residues.

It belongs to the TALE/IRO homeobox family.

It localises to the nucleus. The protein is Iroquois-class homeodomain protein IRX-1 (IRX1) of Homo sapiens (Human).